A 370-amino-acid polypeptide reads, in one-letter code: S-adenosylmethionine:tRNA ribosyltransferase-isomerase (370 aa).

Belongs to the QueA family. Monomer.

The protein localises to the cytoplasm. It carries out the reaction 7-aminomethyl-7-carbaguanosine(34) in tRNA + S-adenosyl-L-methionine = epoxyqueuosine(34) in tRNA + adenine + L-methionine + 2 H(+). Its pathway is tRNA modification; tRNA-queuosine biosynthesis. Functionally, transfers and isomerizes the ribose moiety from AdoMet to the 7-aminomethyl group of 7-deazaguanine (preQ1-tRNA) to give epoxyqueuosine (oQ-tRNA). This is S-adenosylmethionine:tRNA ribosyltransferase-isomerase from Synechococcus sp. (strain WH7803).